A 311-amino-acid polypeptide reads, in one-letter code: Aspartate carbamoyltransferase catalytic subunit (311 aa).

Arg-55 and Thr-56 together coordinate carbamoyl phosphate. Residue Lys-85 coordinates L-aspartate. Carbamoyl phosphate is bound by residues Arg-106, His-134, and Gln-137. Residues Arg-167 and Arg-228 each coordinate L-aspartate. The carbamoyl phosphate site is built by Leu-266 and Pro-267.

This sequence belongs to the aspartate/ornithine carbamoyltransferase superfamily. ATCase family. As to quaternary structure, heterododecamer (2C3:3R2) of six catalytic PyrB chains organized as two trimers (C3), and six regulatory PyrI chains organized as three dimers (R2).

It catalyses the reaction carbamoyl phosphate + L-aspartate = N-carbamoyl-L-aspartate + phosphate + H(+). It participates in pyrimidine metabolism; UMP biosynthesis via de novo pathway; (S)-dihydroorotate from bicarbonate: step 2/3. In terms of biological role, catalyzes the condensation of carbamoyl phosphate and aspartate to form carbamoyl aspartate and inorganic phosphate, the committed step in the de novo pyrimidine nucleotide biosynthesis pathway. The protein is Aspartate carbamoyltransferase catalytic subunit of Psychromonas ingrahamii (strain DSM 17664 / CCUG 51855 / 37).